Reading from the N-terminus, the 197-residue chain is MKVLQEKILNEGKVLSGDVLKVDAFLNHQIDPVLMQEIGKEFAKRFKEENITKIVTIESSGIAPAVMAALELGVKVIFARKRKSLTLQDNMYVANVYSFTKQETNEISLSRNHIDESDRVLIIDDFLANGQAALGLMSLVEQAGASIAGIGIVIEKAFQDGGKKLREQGIRVESLAEIASLDNNAVTFVQQETAEVK.

Leu20 and Asn27 together coordinate xanthine. 5-phospho-alpha-D-ribose 1-diphosphate is bound at residue 128-132; it reads ANGQA. Lys156 lines the xanthine pocket.

The protein belongs to the purine/pyrimidine phosphoribosyltransferase family. Xpt subfamily. As to quaternary structure, homodimer.

The protein localises to the cytoplasm. It catalyses the reaction XMP + diphosphate = xanthine + 5-phospho-alpha-D-ribose 1-diphosphate. It participates in purine metabolism; XMP biosynthesis via salvage pathway; XMP from xanthine: step 1/1. Converts the preformed base xanthine, a product of nucleic acid breakdown, to xanthosine 5'-monophosphate (XMP), so it can be reused for RNA or DNA synthesis. The polypeptide is Xanthine phosphoribosyltransferase (Bacillus anthracis (strain A0248)).